The sequence spans 374 residues: Queuine tRNA-ribosyltransferase (374 aa).

Catalysis depends on aspartate 89, which acts as the Proton acceptor. Substrate contacts are provided by residues aspartate 89–phenylalanine 93, aspartate 143, glutamine 185, and glycine 212. The segment at glycine 243–aspartate 249 is RNA binding. The Nucleophile role is filled by aspartate 262. Positions threonine 267–arginine 271 are RNA binding; important for wobble base 34 recognition. Positions 300, 302, 305, and 331 each coordinate Zn(2+).

This sequence belongs to the queuine tRNA-ribosyltransferase family. In terms of assembly, homodimer. Within each dimer, one monomer is responsible for RNA recognition and catalysis, while the other monomer binds to the replacement base PreQ1. Zn(2+) serves as cofactor.

The enzyme catalyses 7-aminomethyl-7-carbaguanine + guanosine(34) in tRNA = 7-aminomethyl-7-carbaguanosine(34) in tRNA + guanine. The protein operates within tRNA modification; tRNA-queuosine biosynthesis. In terms of biological role, catalyzes the base-exchange of a guanine (G) residue with the queuine precursor 7-aminomethyl-7-deazaguanine (PreQ1) at position 34 (anticodon wobble position) in tRNAs with GU(N) anticodons (tRNA-Asp, -Asn, -His and -Tyr). Catalysis occurs through a double-displacement mechanism. The nucleophile active site attacks the C1' of nucleotide 34 to detach the guanine base from the RNA, forming a covalent enzyme-RNA intermediate. The proton acceptor active site deprotonates the incoming PreQ1, allowing a nucleophilic attack on the C1' of the ribose to form the product. After dissociation, two additional enzymatic reactions on the tRNA convert PreQ1 to queuine (Q), resulting in the hypermodified nucleoside queuosine (7-(((4,5-cis-dihydroxy-2-cyclopenten-1-yl)amino)methyl)-7-deazaguanosine). The chain is Queuine tRNA-ribosyltransferase from Saccharophagus degradans (strain 2-40 / ATCC 43961 / DSM 17024).